The following is a 232-amino-acid chain: DNA repair protein RecO (232 aa).

The protein belongs to the RecO family.

Involved in DNA repair and RecF pathway recombination. This chain is DNA repair protein RecO, found in Francisella tularensis subsp. novicida (strain U112).